The primary structure comprises 363 residues: Carbamoyl phosphate synthase small chain (363 aa).

Residues 1–172 (MKAFLVLDNG…TKYIFGTHTG (172 aa)) form a CPSase region. L-glutamine is bound by residues Ser45, Gly224, and Gly226. One can recognise a Glutamine amidotransferase type-1 domain in the interval 176 to 362 (KLAVYDYGVK…YDLVETTKRG (187 aa)). Cys252 functions as the Nucleophile in the catalytic mechanism. The L-glutamine site is built by Leu253, Gln256, Asn294, Gly296, and Phe297. Catalysis depends on residues His335 and Glu337.

It belongs to the CarA family. In terms of assembly, composed of two chains; the small (or glutamine) chain promotes the hydrolysis of glutamine to ammonia, which is used by the large (or ammonia) chain to synthesize carbamoyl phosphate. Tetramer of heterodimers (alpha,beta)4.

It carries out the reaction hydrogencarbonate + L-glutamine + 2 ATP + H2O = carbamoyl phosphate + L-glutamate + 2 ADP + phosphate + 2 H(+). The catalysed reaction is L-glutamine + H2O = L-glutamate + NH4(+). The protein operates within amino-acid biosynthesis; L-arginine biosynthesis; carbamoyl phosphate from bicarbonate: step 1/1. Its pathway is pyrimidine metabolism; UMP biosynthesis via de novo pathway; (S)-dihydroorotate from bicarbonate: step 1/3. Functionally, small subunit of the glutamine-dependent carbamoyl phosphate synthetase (CPSase). CPSase catalyzes the formation of carbamoyl phosphate from the ammonia moiety of glutamine, carbonate, and phosphate donated by ATP, constituting the first step of 2 biosynthetic pathways, one leading to arginine and/or urea and the other to pyrimidine nucleotides. The small subunit (glutamine amidotransferase) binds and cleaves glutamine to supply the large subunit with the substrate ammonia. This is Carbamoyl phosphate synthase small chain from Leptospira borgpetersenii serovar Hardjo-bovis (strain L550).